Consider the following 94-residue polypeptide: UPF0358 protein Bcer98_2651 (94 aa).

The protein belongs to the UPF0358 family.

The polypeptide is UPF0358 protein Bcer98_2651 (Bacillus cytotoxicus (strain DSM 22905 / CIP 110041 / 391-98 / NVH 391-98)).